The primary structure comprises 156 residues: Ribosomal RNA large subunit methyltransferase H (156 aa).

S-adenosyl-L-methionine contacts are provided by residues Leu-73, Gly-104, and 123–128 (LSALTL).

Belongs to the RNA methyltransferase RlmH family. As to quaternary structure, homodimer.

The protein localises to the cytoplasm. The enzyme catalyses pseudouridine(1915) in 23S rRNA + S-adenosyl-L-methionine = N(3)-methylpseudouridine(1915) in 23S rRNA + S-adenosyl-L-homocysteine + H(+). Functionally, specifically methylates the pseudouridine at position 1915 (m3Psi1915) in 23S rRNA. In Shewanella sp. (strain MR-7), this protein is Ribosomal RNA large subunit methyltransferase H.